Consider the following 276-residue polypeptide: Tryptase beta-2 (276 aa).

The signal sequence occupies residues Met-1–Ser-21. Positions Ala-22–Gly-31 are cleaved as a propeptide — activation peptide. The 242-residue stretch at Ile-32–Pro-273 folds into the Peptidase S1 domain. Cys-60 and Cys-76 form a disulfide bridge. His-75 (charge relay system) is an active-site residue. Residue Tyr-98 is modified to Phosphotyrosine. Asp-122 acts as the Charge relay system in catalysis. The N-linked (GlcNAc...) asparagine glycan is linked to Asn-133. Intrachain disulfides connect Cys-156–Cys-231, Cys-189–Cys-212, and Cys-221–Cys-249. Ser-225 acts as the Charge relay system in catalysis.

Belongs to the peptidase S1 family. Tryptase subfamily. Homotetramer. The active tetramer is converted to inactive monomers at neutral and acidic pH in the absence of heparin. Low concentrations of inactive monomers become active monomers at pH 6.0 in the presence of heparin. When the concentration of active monomers is higher, they convert to active monomers and then to active tetramers. These monomers are active and functionally distinct from the tetrameric enzyme. In contrast to the hidden active sites in the tetrameric form, the active site of the monomeric form is accessible for macromolecular proteins and inhibitors, e.g. fibrinogen which is a substrate for the monomeric but not for the tetrameric form. The monomeric form forms a complex with SERPINB6. In terms of tissue distribution, during embryogenesis, detected primarily in skin.

The protein localises to the secreted. It carries out the reaction Preferential cleavage: Arg-|-Xaa, Lys-|-Xaa, but with more restricted specificity than trypsin.. In terms of biological role, tryptase is the major neutral protease present in mast cells and is secreted upon the coupled activation-degranulation response of this cell type. Plays a role in innate immunity. The protein is Tryptase beta-2 (Tpsb2) of Mus musculus (Mouse).